Reading from the N-terminus, the 154-residue chain is Probable chemoreceptor glutamine deamidase CheD (154 aa).

This sequence belongs to the CheD family.

It carries out the reaction L-glutaminyl-[protein] + H2O = L-glutamyl-[protein] + NH4(+). Probably deamidates glutamine residues to glutamate on methyl-accepting chemotaxis receptors (MCPs), playing an important role in chemotaxis. This is Probable chemoreceptor glutamine deamidase CheD from Methanococcus maripaludis (strain C5 / ATCC BAA-1333).